The primary structure comprises 104 residues: MSKYYILIELMNDKKNTNSSCDIFSFYLNFSDNPFSSFRLKSRLLYGIFSCFLLFYSLKDLIGVFKQKYLYLSILLLWLLVLLFCLAKGLSHNLRADSFLQYPL.

2 helical membrane passes run 45-65 and 70-90; these read LYGI…IGVF and LYLS…AKGL.

It is found in the membrane. This is an uncharacterized protein from Saccharomyces cerevisiae (strain ATCC 204508 / S288c) (Baker's yeast).